Consider the following 419-residue polypeptide: UDP-N-acetylmuramoylalanine--D-glutamate ligase (419 aa).

109 to 115 (GSAGKTT) is a binding site for ATP.

This sequence belongs to the MurCDEF family.

It localises to the cytoplasm. The catalysed reaction is UDP-N-acetyl-alpha-D-muramoyl-L-alanine + D-glutamate + ATP = UDP-N-acetyl-alpha-D-muramoyl-L-alanyl-D-glutamate + ADP + phosphate + H(+). Its pathway is cell wall biogenesis; peptidoglycan biosynthesis. Its function is as follows. Cell wall formation. Catalyzes the addition of glutamate to the nucleotide precursor UDP-N-acetylmuramoyl-L-alanine (UMA). The chain is UDP-N-acetylmuramoylalanine--D-glutamate ligase from Chlamydia caviae (strain ATCC VR-813 / DSM 19441 / 03DC25 / GPIC) (Chlamydophila caviae).